The sequence spans 322 residues: ATP-dependent 6-phosphofructokinase (322 aa).

An ATP-binding site is contributed by G11. 21–25 (RAVVR) contacts ADP. ATP contacts are provided by residues 72-73 (RC) and 102-105 (GDGS). A Mg(2+)-binding site is contributed by D103. Residue 127–129 (TID) coordinates substrate. The active-site Proton acceptor is the D129. R156 is a binding site for ADP. Substrate is bound by residues R164 and 171–173 (MGR). ADP is bound by residues 187-189 (GAE), R213, and 215-217 (KKH). Residues E224, R245, and 251–254 (HVQR) contribute to the substrate site.

The protein belongs to the phosphofructokinase type A (PFKA) family. ATP-dependent PFK group I subfamily. Prokaryotic clade 'B1' sub-subfamily. As to quaternary structure, homotetramer. Requires Mg(2+) as cofactor.

It localises to the cytoplasm. It carries out the reaction beta-D-fructose 6-phosphate + ATP = beta-D-fructose 1,6-bisphosphate + ADP + H(+). It functions in the pathway carbohydrate degradation; glycolysis; D-glyceraldehyde 3-phosphate and glycerone phosphate from D-glucose: step 3/4. Allosterically activated by ADP and other diphosphonucleosides, and allosterically inhibited by phosphoenolpyruvate. Functionally, catalyzes the phosphorylation of D-fructose 6-phosphate to fructose 1,6-bisphosphate by ATP, the first committing step of glycolysis. The protein is ATP-dependent 6-phosphofructokinase of Staphylococcus aureus (strain JH1).